The following is a 169-amino-acid chain: Fumarase E (169 aa).

It belongs to the MtlR/FumE family.

The enzyme catalyses (S)-malate = fumarate + H2O. In vitro catalyzes the addition of water to fumarate, forming malate. Cannot catalyze the reverse reaction. Cannot use the cis-isomer maleate as substrate. The polypeptide is Fumarase E (Escherichia coli (strain K12)).